Consider the following 309-residue polypeptide: Chronophin (309 aa).

D25 (nucleophile) is an active-site residue. Mg(2+) is bound by residues D25 and D27. D27 acts as the Proton donor in catalysis. Substrate-binding positions include 58-60 (SNN), H178, and K209. D234 serves as a coordination point for Mg(2+).

It belongs to the HAD-like hydrolase superfamily. Homodimer. It depends on Mg(2+) as a cofactor.

The protein localises to the cytoplasm. It is found in the cytosol. The protein resides in the cytoskeleton. Its subcellular location is the cell projection. It localises to the ruffle membrane. The protein localises to the lamellipodium membrane. It is found in the cell membrane. It carries out the reaction pyridoxal 5'-phosphate + H2O = pyridoxal + phosphate. It catalyses the reaction pyridoxine 5'-phosphate + H2O = pyridoxine + phosphate. The catalysed reaction is pyridoxamine + phosphate = pyridoxamine 5'-phosphate + H2O. The enzyme catalyses O-phospho-L-seryl-[protein] + H2O = L-seryl-[protein] + phosphate. In terms of biological role, functions as a pyridoxal phosphate (PLP) phosphatase, which also catalyzes the dephosphorylation of pyridoxine 5'-phosphate (PNP) and pyridoxamine 5'-phosphate (PMP), with order of substrate preference PLP &gt; PNP &gt; PMP and therefore plays a role in vitamin B6 metabolism. Also functions as a protein serine phosphatase that specifically dephosphorylates 'Ser-3' in proteins of the actin-depolymerizing factor (ADF)/cofilin family like CFL1 and DSTN. Thereby, regulates cofilin-dependent actin cytoskeleton reorganization, being required for normal progress through mitosis and normal cytokinesis. Does not dephosphorylate phosphothreonines in LIMK1. Does not dephosphorylate peptides containing phosphotyrosine. This chain is Chronophin, found in Rattus norvegicus (Rat).